The sequence spans 87 residues: U1-theraphotoxin-Ct1a (87 aa).

The first 23 residues, 1–23 (MKTFTLIAILTCAVLVIFHAAAA), serve as a signal peptide directing secretion. Positions 24-48 (EELEVQDVIQPEDTLTGLATLDEDR) are excised as a propeptide.

This sequence belongs to the neurotoxin 12 (Hwtx-2) family. 03 (juruin) subfamily. In terms of processing, contains 3 disulfide bonds. Two different connectivities are observed in similar proteins (C1-C3, C2-C5, C4-C6 or C1-C4, C2-C5, C3-C6). In terms of tissue distribution, expressed by the venom gland.

The protein resides in the secreted. Its function is as follows. This toxin causes paralysis and death to sheep blowflies. It may inhibit voltage-gated calcium channels. The chain is U1-theraphotoxin-Ct1a from Coremiocnemis tropix (Australian tarantula spider).